Reading from the N-terminus, the 822-residue chain is DNA-directed RNA polymerase subunit beta N-terminal section (822 aa).

A disordered region spans residues 376 to 408 (ELTEGNPSSKSQTKNKTSASKKSKTLNVANTKG). Over residues 383 to 393 (SSKSQTKNKTS) the composition is skewed to low complexity.

This sequence belongs to the RNA polymerase beta chain family. As to quaternary structure, in plastids the minimal PEP RNA polymerase catalytic core is composed of four subunits: alpha, beta, beta', and beta''. When a (nuclear-encoded) sigma factor is associated with the core the holoenzyme is formed, which can initiate transcription.

It localises to the plastid. It is found in the chloroplast. It carries out the reaction RNA(n) + a ribonucleoside 5'-triphosphate = RNA(n+1) + diphosphate. Functionally, DNA-dependent RNA polymerase catalyzes the transcription of DNA into RNA using the four ribonucleoside triphosphates as substrates. The protein is DNA-directed RNA polymerase subunit beta N-terminal section (rpoB1) of Chlamydomonas reinhardtii (Chlamydomonas smithii).